The sequence spans 274 residues: Thiazole synthase (274 aa).

The active-site Schiff-base intermediate with DXP is K111. 1-deoxy-D-xylulose 5-phosphate contacts are provided by residues G172, 198 to 199 (AG), and 220 to 221 (NT).

This sequence belongs to the ThiG family. Homotetramer. Forms heterodimers with either ThiH or ThiS.

The protein localises to the cytoplasm. It catalyses the reaction [ThiS sulfur-carrier protein]-C-terminal-Gly-aminoethanethioate + 2-iminoacetate + 1-deoxy-D-xylulose 5-phosphate = [ThiS sulfur-carrier protein]-C-terminal Gly-Gly + 2-[(2R,5Z)-2-carboxy-4-methylthiazol-5(2H)-ylidene]ethyl phosphate + 2 H2O + H(+). It functions in the pathway cofactor biosynthesis; thiamine diphosphate biosynthesis. In terms of biological role, catalyzes the rearrangement of 1-deoxy-D-xylulose 5-phosphate (DXP) to produce the thiazole phosphate moiety of thiamine. Sulfur is provided by the thiocarboxylate moiety of the carrier protein ThiS. In vitro, sulfur can be provided by H(2)S. This Gloeobacter violaceus (strain ATCC 29082 / PCC 7421) protein is Thiazole synthase.